The primary structure comprises 301 residues: uncharacterized protein (301 aa).

Disordered stretches follow at residues 167–186 (DVHL…PKER) and 225–244 (ASES…EGAS). Residues 170-181 (LNSTTPPHTAQV) show a composition bias toward polar residues. The segment covering 226–237 (SESSLETSSVSS) has biased composition (low complexity).

This is an uncharacterized protein from Mus musculus (Mouse).